The chain runs to 494 residues: Cobyrinate a,c-diamide synthase (494 aa).

Positions 270–475 (KIGVALDEAF…AHLHGVAYRE (206 aa)) constitute a GATase cobBQ-type domain. C352 serves as the catalytic Nucleophile.

It belongs to the CobB/CbiA family. Mg(2+) serves as cofactor.

It catalyses the reaction cob(II)yrinate + 2 L-glutamine + 2 ATP + 2 H2O = cob(II)yrinate a,c diamide + 2 L-glutamate + 2 ADP + 2 phosphate + 2 H(+). The enzyme catalyses Ni-sirohydrochlorin + 2 L-glutamine + 2 ATP + 2 H2O = Ni-sirohydrochlorin a,c-diamide + 2 L-glutamate + 2 ADP + 2 phosphate + 2 H(+). The protein operates within cofactor biosynthesis; adenosylcobalamin biosynthesis; cob(II)yrinate a,c-diamide from sirohydrochlorin (anaerobic route): step 10/10. Its function is as follows. Catalyzes the ATP-dependent amidation of the two carboxylate groups at positions a and c of cobyrinate, using either L-glutamine or ammonia as the nitrogen source (Potential). Involved in the biosynthesis of the unique nickel-containing tetrapyrrole coenzyme F430, the prosthetic group of methyl-coenzyme M reductase (MCR), which plays a key role in methanogenesis and anaerobic methane oxidation. Catalyzes the ATP-dependent amidation of the two carboxylate groups at positions a and c of Ni-sirohydrochlorin, using L-glutamine or ammonia as the nitrogen source. Also able to use sirohydrochlorin as substrate, but only produces a monoamide species in a much slower reaction. Unable to use other metallosirohydrochlorins such as sirohaem and Co-sirohydrochlorin. The polypeptide is Cobyrinate a,c-diamide synthase (Methanosarcina barkeri (strain Fusaro / DSM 804)).